Consider the following 297-residue polypeptide: Lipoprotein NlpD/LppB homolog (297 aa).

The N-terminal stretch at 1-22 is a signal peptide; it reads MDKGEGLRLAATLRQWTRLYGG. The N-palmitoyl cysteine moiety is linked to residue Cys23. The S-diacylglycerol cysteine moiety is linked to residue Cys23. Residues 67–111 enclose the LysM domain; sequence GQYIVRRGDTLYSIAFRFGWDWKALAARNGIAPPYTIQVGQAIQF. The segment at 134-168 is disordered; the sequence is TKPTPVPPAVSTSVPAKPAPAPASTTTPPSSGATP.

This sequence belongs to the E.coli NlpD/Haemophilus LppB family.

It is found in the cell inner membrane. In Pseudomonas aeruginosa (strain ATCC 15692 / DSM 22644 / CIP 104116 / JCM 14847 / LMG 12228 / 1C / PRS 101 / PAO1), this protein is Lipoprotein NlpD/LppB homolog.